Here is a 474-residue protein sequence, read N- to C-terminus: Cbb3-type cytochrome c oxidase subunit CcoN1 (474 aa).

At 1 to 16 (MNTATSTAYSYKVVRQ) the chain is on the cytoplasmic side. The chain crosses the membrane as a helical span at residues 17–37 (FAIMTVVWGIVGMGLGVFIAA). The Periplasmic portion of the chain corresponds to 38–60 (QLAWPFLNFDLPWTSFGRLRPLH). H60 serves as a coordination point for heme b. Residues 61–81 (TNAVIFAFGGCALFATSYYSV) form a helical membrane-spanning segment. At 82-96 (QRTCQTTLFAPKLAA) the chain is on the cytoplasmic side. The helical transmembrane segment at 97–117 (FTFWGWQLVILLAAISLPLGF) threads the bilayer. At 118 to 129 (TSSKEYAELEWP) the chain is on the periplasmic side. A helical membrane pass occupies residues 130–150 (IDILITIVWVAYAVVFFGTLA). The Cytoplasmic segment spans residues 151–156 (KRKVKH). The chain crosses the membrane as a helical span at residues 157–177 (IYVGNWFFGAFILTVAILHVV). Topologically, residues 178 to 205 (NNLEIPVTAMKSYSLYAGATDAMVQWWY) are periplasmic. Residues 206–226 (GHNAVGFFLTAGFLGIMYYFV) traverse the membrane as a helical segment. H207 contacts Cu cation. At 227-238 (PKQAERPVYSYR) the chain is on the cytoplasmic side. A helical transmembrane segment spans residues 239 to 259 (LSIVHFWALITVYIWAGPHHL). Residues H257 and H258 each contribute to the Cu cation site. The Periplasmic portion of the chain corresponds to 260–270 (HYTALPDWAQS). A helical transmembrane segment spans residues 271–291 (LGMVMSLILLAPSWGGMINGM). Over 292-308 (MTLSGAWHKLRSDPILR) the chain is Cytoplasmic. Residues 309-329 (FLVVSLAFYGMSTFEGPMMAI) traverse the membrane as a helical segment. Over 330–345 (KTVNALSHYTDWTIGH) the chain is Periplasmic. Heme b is bound by residues H345 and H347. A helical membrane pass occupies residues 346–366 (VHAGALGWVAMVSIGALYHLV). The Cytoplasmic segment spans residues 367–384 (PKVFGREQMHSIGLINTH). Residues 385–405 (FWLATIGTVLYIASMWVNGIA) form a helical membrane-spanning segment. Over 406–432 (QGLMWRAINDDGTLTYSFVESLEASHP) the chain is Periplasmic. Residues 433–453 (GFVVRMIGGAIFFAGMLVMAY) form a helical membrane-spanning segment. Residues 454–474 (NTWRTVQAAKPAEYDAAAQIA) lie on the Cytoplasmic side of the membrane.

It belongs to the heme-copper respiratory oxidase family. Component of the cbb3-type cytochrome c oxidase at least composed of CcoN, CcoO, CcoQ and CcoP. Requires Cu(2+) as cofactor. Heme b is required as a cofactor.

Its subcellular location is the cell inner membrane. It carries out the reaction 4 Fe(II)-[cytochrome c] + O2 + 8 H(+)(in) = 4 Fe(III)-[cytochrome c] + 2 H2O + 4 H(+)(out). It functions in the pathway energy metabolism; oxidative phosphorylation. Functionally, cbb3-type cytochrome c oxidase is the component of the respiratory chain that catalyzes the reduction of oxygen to water. Subunits CcoN and CcoO form the functional core of the enzyme complex. Subunits CcoP and CcoQ may optionally bind to the core. CcoN is the catalytic subunit of the enzyme. Electrons originating in cytochrome c or a quinol are transferred to the bimetallic center formed by a high-spin heme and copper B. The complex also functions as a proton pump. This Stutzerimonas stutzeri (Pseudomonas stutzeri) protein is Cbb3-type cytochrome c oxidase subunit CcoN1.